A 226-amino-acid chain; its full sequence is Ribose-5-phosphate isomerase A (226 aa).

Residues Thr-26–Thr-29, Asp-82–Asp-85, and Lys-95–Gly-98 contribute to the substrate site. The active-site Proton acceptor is the Glu-104. Position 122 (Lys-122) interacts with substrate.

This sequence belongs to the ribose 5-phosphate isomerase family. Homodimer.

The enzyme catalyses aldehydo-D-ribose 5-phosphate = D-ribulose 5-phosphate. It participates in carbohydrate degradation; pentose phosphate pathway; D-ribose 5-phosphate from D-ribulose 5-phosphate (non-oxidative stage): step 1/1. In terms of biological role, catalyzes the reversible conversion of ribose-5-phosphate to ribulose 5-phosphate. The chain is Ribose-5-phosphate isomerase A from Streptococcus thermophilus (strain CNRZ 1066).